The following is a 411-amino-acid chain: Multifunctional CCA protein (411 aa).

Gly8 and Arg11 together coordinate ATP. Positions 8 and 11 each coordinate CTP. Mg(2+)-binding residues include Glu21 and Asp23. ATP-binding residues include Arg91, Arg137, and Arg140. CTP-binding residues include Arg91, Arg137, and Arg140. An HD domain is found at 228-329 (TGVHALLALE…LKTLLALDGL (102 aa)).

Belongs to the tRNA nucleotidyltransferase/poly(A) polymerase family. Bacterial CCA-adding enzyme type 1 subfamily. Monomer. Can also form homodimers and oligomers. Mg(2+) serves as cofactor. Requires Ni(2+) as cofactor.

The enzyme catalyses a tRNA precursor + 2 CTP + ATP = a tRNA with a 3' CCA end + 3 diphosphate. It carries out the reaction a tRNA with a 3' CCA end + 2 CTP + ATP = a tRNA with a 3' CCACCA end + 3 diphosphate. Catalyzes the addition and repair of the essential 3'-terminal CCA sequence in tRNAs without using a nucleic acid template. Adds these three nucleotides in the order of C, C, and A to the tRNA nucleotide-73, using CTP and ATP as substrates and producing inorganic pyrophosphate. tRNA 3'-terminal CCA addition is required both for tRNA processing and repair. Also involved in tRNA surveillance by mediating tandem CCA addition to generate a CCACCA at the 3' terminus of unstable tRNAs. While stable tRNAs receive only 3'-terminal CCA, unstable tRNAs are marked with CCACCA and rapidly degraded. This is Multifunctional CCA protein from Teredinibacter turnerae (strain ATCC 39867 / T7901).